The primary structure comprises 300 residues: Putative glycosyltransferase ORF300 (300 aa).

Belongs to the glycosyltransferase group 1 family. Glycosyltransferase 4 subfamily.

In Acidianus hospitalis (AFV-1), this protein is Putative glycosyltransferase ORF300.